The chain runs to 130 residues: ATP synthase epsilon chain, chloroplastic (130 aa).

Belongs to the ATPase epsilon chain family. F-type ATPases have 2 components, CF(1) - the catalytic core - and CF(0) - the membrane proton channel. CF(1) has five subunits: alpha(3), beta(3), gamma(1), delta(1), epsilon(1). CF(0) has three main subunits: a, b and c.

The protein resides in the plastid. Its subcellular location is the chloroplast thylakoid membrane. Its function is as follows. Produces ATP from ADP in the presence of a proton gradient across the membrane. The sequence is that of ATP synthase epsilon chain, chloroplastic from Tupiella akineta (Green alga).